We begin with the raw amino-acid sequence, 603 residues long: Elongation factor 4 (603 aa).

One can recognise a tr-type G domain in the interval 7 to 189 (SRLRNFCIIA…AVVDRIPSPK (183 aa)). GTP contacts are provided by residues 19-24 (DHGKST) and 136-139 (NKVD).

The protein belongs to the TRAFAC class translation factor GTPase superfamily. Classic translation factor GTPase family. LepA subfamily.

The protein resides in the cell inner membrane. The catalysed reaction is GTP + H2O = GDP + phosphate + H(+). Its function is as follows. Required for accurate and efficient protein synthesis under certain stress conditions. May act as a fidelity factor of the translation reaction, by catalyzing a one-codon backward translocation of tRNAs on improperly translocated ribosomes. Back-translocation proceeds from a post-translocation (POST) complex to a pre-translocation (PRE) complex, thus giving elongation factor G a second chance to translocate the tRNAs correctly. Binds to ribosomes in a GTP-dependent manner. The sequence is that of Elongation factor 4 from Prochlorococcus marinus (strain NATL2A).